Reading from the N-terminus, the 720-residue chain is Zinc finger protein 408 (720 aa).

Residues 201 to 350 form a disordered region; it reads VQQEVASPGE…GPAGSSPKQG (150 aa). Polar residues predominate over residues 275–285; the sequence is LQSNSATQQDP. The segment covering 287 to 296 has biased composition (low complexity); that stretch reads GSGASFSSSA. At T322 the chain carries Phosphothreonine. C2H2-type zinc fingers lie at residues 353 to 375, 381 to 403, 409 to 431, 437 to 459, 468 to 490, 496 to 518, 524 to 546, 551 to 573, 579 to 601, and 607 to 629; these read YRCG…AFVH, FLCT…MLGH, FPCP…QVVH, FACD…RKTH, CPCP…MRLH, FLCP…LRLH, YRCP…LISH, HLCP…ERLH, FPCP…LKSH, and YRCP…QLSH.

Highest expression is observed in adult retina; abundantly expressed in the fetal eye. In the retina, it is detected in the outer nuclear layer, especially cone and rod photoreceptor cells, ganglion cell layer and both outer and inner plexiform layers (at protein level). Expressed in retinal blood vessels (at protein level).

It localises to the nucleus. Functionally, may be involved in transcriptional regulation. The chain is Zinc finger protein 408 (ZNF408) from Homo sapiens (Human).